Consider the following 199-residue polypeptide: A-type ATP synthase subunit E (199 aa).

The protein belongs to the V-ATPase E subunit family. In terms of assembly, has multiple subunits with at least A(3), B(3), C, D, E, F, H, I and proteolipid K(x).

It is found in the cell membrane. Functionally, component of the A-type ATP synthase that produces ATP from ADP in the presence of a proton gradient across the membrane. The protein is A-type ATP synthase subunit E of Pyrococcus abyssi (strain GE5 / Orsay).